A 158-amino-acid polypeptide reads, in one-letter code: MFDIGWSELLVIGVVALVVVGPKDLPEMFRTLGRVTAKARNMAREFQRAMEAAADETGVKDVVKDVKNVTSPRSMGLDAMKQAADRFEKWDPMKPQQGAPKPAAPASSIPAAKAQQGAGAAAVTAPPASEPAAPVPQAPAAAAPEAASPAPAEPKSNA.

The helical transmembrane segment at 1-21 (MFDIGWSELLVIGVVALVVVG) threads the bilayer. The segment at 73-158 (RSMGLDAMKQ…PAPAEPKSNA (86 aa)) is disordered. Over residues 83 to 92 (AADRFEKWDP) the composition is skewed to basic and acidic residues. Low complexity-rich tracts occupy residues 94–132 (KPQQGAPKPAAPASSIPAAKAQQGAGAAAVTAPPASEPA) and 138–158 (APAAAAPEAASPAPAEPKSNA).

It belongs to the TatB family. The Tat system comprises two distinct complexes: a TatABC complex, containing multiple copies of TatA, TatB and TatC subunits, and a separate TatA complex, containing only TatA subunits. Substrates initially bind to the TatABC complex, which probably triggers association of the separate TatA complex to form the active translocon.

The protein resides in the cell inner membrane. Part of the twin-arginine translocation (Tat) system that transports large folded proteins containing a characteristic twin-arginine motif in their signal peptide across membranes. Together with TatC, TatB is part of a receptor directly interacting with Tat signal peptides. TatB may form an oligomeric binding site that transiently accommodates folded Tat precursor proteins before their translocation. In Cereibacter sphaeroides (strain ATCC 17029 / ATH 2.4.9) (Rhodobacter sphaeroides), this protein is Sec-independent protein translocase protein TatB.